Reading from the N-terminus, the 257-residue chain is OCIA domain-containing protein 1 (257 aa).

2 disordered regions span residues 1–20 and 148–257; these read MDSP…PHPL and YSDE…SWTD. The OCIA domain maps to 1–110; that stretch reads MDSPLNDGSH…MRLPNSHLGE (110 aa). The span at 156–170 shows a compositional bias: polar residues; that stretch reads GRSTSLNLDTESRPT. Over residues 204–216 the composition is skewed to basic and acidic residues; sequence EDLRRRNREEYSK.

It belongs to the OCIAD1 family. Interacts with STAT3 and ARF1. In terms of tissue distribution, expressed in all cells of the primary lymph gland lobe.

The protein resides in the endosome. In terms of biological role, maintains stem cell potency. Involved in endocytic pathways that mediate signaling during hematopoiesis. The chain is OCIA domain-containing protein 1 (asrij) from Drosophila melanogaster (Fruit fly).